A 173-amino-acid chain; its full sequence is Peptide methionine sulfoxide reductase MsrA (173 aa).

Cys10 is an active-site residue.

Belongs to the MsrA Met sulfoxide reductase family.

It catalyses the reaction L-methionyl-[protein] + [thioredoxin]-disulfide + H2O = L-methionyl-(S)-S-oxide-[protein] + [thioredoxin]-dithiol. It carries out the reaction [thioredoxin]-disulfide + L-methionine + H2O = L-methionine (S)-S-oxide + [thioredoxin]-dithiol. In terms of biological role, has an important function as a repair enzyme for proteins that have been inactivated by oxidation. Catalyzes the reversible oxidation-reduction of methionine sulfoxide in proteins to methionine. In Psychrobacter cryohalolentis (strain ATCC BAA-1226 / DSM 17306 / VKM B-2378 / K5), this protein is Peptide methionine sulfoxide reductase MsrA.